A 358-amino-acid chain; its full sequence is Gentisate 1,2-dioxygenase (358 aa).

Positions 239–358 (QTLRQRAEND…AFNFYAEAEP (120 aa)) constitute a Cupin type-1 domain.

The protein belongs to the gentisate 1,2-dioxygenase family. In terms of assembly, homotetramer.

It carries out the reaction 2,5-dihydroxybenzoate + O2 = 3-maleylpyruvate + H(+). The protein operates within aromatic compound metabolism; naphthalene degradation. Its activity is regulated as follows. Inhibited by 2,2'-dipyridyl. Functionally, catalyzes the oxygen-dependent ring fission of gentisate between the carboxyl and proximal hydroxyl groups at positions 1 and 2 of the aromatic ring to form maleylpyruvate. No activity with cathechol and protecatechuate as substrates. Part of a 3-hydroxybenzoic acid-degradation pathway. This is Gentisate 1,2-dioxygenase (gdoA) from Haloferax sp.